The primary structure comprises 602 residues: Proline--tRNA ligase (602 aa).

This sequence belongs to the class-II aminoacyl-tRNA synthetase family. ProS type 1 subfamily. In terms of assembly, homodimer.

Its subcellular location is the cytoplasm. The enzyme catalyses tRNA(Pro) + L-proline + ATP = L-prolyl-tRNA(Pro) + AMP + diphosphate. Its function is as follows. Catalyzes the attachment of proline to tRNA(Pro) in a two-step reaction: proline is first activated by ATP to form Pro-AMP and then transferred to the acceptor end of tRNA(Pro). As ProRS can inadvertently accommodate and process non-cognate amino acids such as alanine and cysteine, to avoid such errors it has two additional distinct editing activities against alanine. One activity is designated as 'pretransfer' editing and involves the tRNA(Pro)-independent hydrolysis of activated Ala-AMP. The other activity is designated 'posttransfer' editing and involves deacylation of mischarged Ala-tRNA(Pro). The misacylated Cys-tRNA(Pro) is not edited by ProRS. The polypeptide is Proline--tRNA ligase (Thermosynechococcus vestitus (strain NIES-2133 / IAM M-273 / BP-1)).